The primary structure comprises 160 residues: UPF0225 protein PP_1119 (160 aa).

It belongs to the UPF0225 family.

This Pseudomonas putida (strain ATCC 47054 / DSM 6125 / CFBP 8728 / NCIMB 11950 / KT2440) protein is UPF0225 protein PP_1119.